The sequence spans 350 residues: DNA polymerase IV (350 aa).

Residues 4–185 (IIHIDMDCFY…LPLGKLPGIG (182 aa)) form the UmuC domain. D8 and D103 together coordinate Mg(2+). Residue E104 is part of the active site.

It belongs to the DNA polymerase type-Y family. Monomer. Mg(2+) is required as a cofactor.

The protein resides in the cytoplasm. The catalysed reaction is DNA(n) + a 2'-deoxyribonucleoside 5'-triphosphate = DNA(n+1) + diphosphate. In terms of biological role, poorly processive, error-prone DNA polymerase involved in untargeted mutagenesis. Copies undamaged DNA at stalled replication forks, which arise in vivo from mismatched or misaligned primer ends. These misaligned primers can be extended by PolIV. Exhibits no 3'-5' exonuclease (proofreading) activity. May be involved in translesional synthesis, in conjunction with the beta clamp from PolIII. This Aeromonas hydrophila subsp. hydrophila (strain ATCC 7966 / DSM 30187 / BCRC 13018 / CCUG 14551 / JCM 1027 / KCTC 2358 / NCIMB 9240 / NCTC 8049) protein is DNA polymerase IV.